A 77-amino-acid polypeptide reads, in one-letter code: Acyl carrier protein (77 aa).

Positions 1–77 constitute a Carrier domain; that stretch reads MSVEAKVKKI…DAIEYIRKKS (77 aa). Residue S37 is modified to O-(pantetheine 4'-phosphoryl)serine.

This sequence belongs to the acyl carrier protein (ACP) family. Post-translationally, 4'-phosphopantetheine is transferred from CoA to a specific serine of apo-ACP by AcpS. This modification is essential for activity because fatty acids are bound in thioester linkage to the sulfhydryl of the prosthetic group.

Its subcellular location is the cytoplasm. The protein operates within lipid metabolism; fatty acid biosynthesis. In terms of biological role, carrier of the growing fatty acid chain in fatty acid biosynthesis. This is Acyl carrier protein from Desulforapulum autotrophicum (strain ATCC 43914 / DSM 3382 / VKM B-1955 / HRM2) (Desulfobacterium autotrophicum).